The following is a 509-amino-acid chain: ATP synthase subunit alpha (509 aa).

Position 169 to 176 (169 to 176 (GDRQTGKT)) interacts with ATP.

The protein belongs to the ATPase alpha/beta chains family. As to quaternary structure, F-type ATPases have 2 components, CF(1) - the catalytic core - and CF(0) - the membrane proton channel. CF(1) has five subunits: alpha(3), beta(3), gamma(1), delta(1), epsilon(1). CF(0) has three main subunits: a(1), b(2) and c(9-12). The alpha and beta chains form an alternating ring which encloses part of the gamma chain. CF(1) is attached to CF(0) by a central stalk formed by the gamma and epsilon chains, while a peripheral stalk is formed by the delta and b chains.

It is found in the cell inner membrane. The enzyme catalyses ATP + H2O + 4 H(+)(in) = ADP + phosphate + 5 H(+)(out). Produces ATP from ADP in the presence of a proton gradient across the membrane. The alpha chain is a regulatory subunit. The sequence is that of ATP synthase subunit alpha from Brucella suis biovar 1 (strain 1330).